We begin with the raw amino-acid sequence, 757 residues long: Protein ALTERED SEED GERMINATION 2 (757 aa).

WD repeat units lie at residues 6–43, 48–87, 91–132, 145–185, 213–253, and 277–316; these read FHDGNIFNLLHTRSQDPSHEVDQRMQFHSSLVRRLSQE, GHQGCVNALAWNSNGSLLISGSDDLRINIWNYSSRKLLHS, GHTA…GRAE, CHTR…SCPP, KQTL…PLAS, and RTNLHLTHVTFSPNGEEVLLSYSGEHVYLMNVNNGICSTG. Residues 245–257 carry the Nuclear localization signal motif; it reads RRMLPPLASSRKR. The TPR repeat unit spans residues 442–475; that stretch reads FKAHYYMSEALQQLGKCKEALDFATAAQHMNPSD. Residues 519 to 601 form a disordered region; it reads ANSDSSHDMS…SSSQNDRTSY (83 aa). A compositionally biased stretch (basic and acidic residues) spans 523–532; sequence SSHDMSRSER. Acidic residues predominate over residues 533–543; the sequence is EDSDYDEELEL. The segment covering 582–601 has biased composition (polar residues); the sequence is TVDNASSGTASSSQNDRTSY. WD repeat units lie at residues 618–658 and 661–700; these read NVGT…LMKV and GDESVLNCIQCHPFDSVVATSGIDNTIKIWSPTASVPSIV. Cysteine 754 carries the S-12-hydroxyfarnesyl cysteine; by FTB/ERA1 lipid modification.

Interacts with DDB1; the subcellular localization of this complex depends on farnesylation status. Binds to HDA9 in the cytosol when farnesylated. Farnesylated at Cys-754 by FTB/ERA1; this modification triggers an exclusion from the nucleus.

Its subcellular location is the nucleus. The protein localises to the cytoplasm. The protein resides in the cytosol. It participates in protein modification; protein ubiquitination. Its function is as follows. May function as a substrate adapter for CUL4-DDB1 E3 ubiquitin-protein ligase complex. Negative regulator of fatty acid biosynthetic process and accumulation. Acts as an abscisic acid (ABA) negative regulator. Involved in responses to salt (NaCl) and osmotic (e.g. in response to mannitol and PEG) stresses. In Arabidopsis thaliana (Mouse-ear cress), this protein is Protein ALTERED SEED GERMINATION 2.